Consider the following 288-residue polypeptide: MEPPDQCSQYMTSLLSPAVDDEKELQDMNAMVLSLTEEVKEEEEDAQPEPEQGTAAGEKLKSAGAQGGEEKDGGGEEKDGGGAGVPGHLWEGNLEGTSGSDGNVEDSDQSEKEPGQQYSRPQGAVGGLEPGNAQQPNVHAFTPLQLQELECIFQREQFPSEFLRRRLARSMNVTELAVQIWFENRRAKWRRHQRALMARNMLPFMAVGQPVMVTAAEAITAPLFISGMRDDYFWDHSHSSSLCFPMPPFPPPSLPLPLMLLPPMPPAGQAEFGPFPFVIVPSFTFPNV.

A disordered region spans residues Ser-16–Pro-136. Residues Val-39 to Pro-48 show a composition bias toward acidic residues. Residues Gly-68–Gly-80 are compositionally biased toward basic and acidic residues. A DNA-binding region (homeobox) is located at residues Gln-134–Gln-193. The Nuclear localization signal signature appears at Arg-186–Ala-195.

This sequence belongs to the paired-like homeobox family. PEPP subfamily. Expressed in testis, mainly expressed in germ cells, but also detected in somatic cells such as Sertoli cells, Leydig cells and peritubular cells.

Its subcellular location is the nucleus. Transcription factor maybe involved in reproductive processes. Modulates expression of target genes encoding proteins involved in processes relevant to spermatogenesis. The polypeptide is Rhox homeobox family member 2B (Homo sapiens (Human)).